A 197-amino-acid polypeptide reads, in one-letter code: Glycerol-3-phosphate acyltransferase (197 aa).

A run of 6 helical transmembrane segments spans residues 1–21 (MNIL…GFLI), 50–70 (WPAL…VKIA), 77–97 (GLIE…PIWL), 111–131 (MFLA…LIVL), 137–157 (VSLS…FYLG), and 158–178 (KFMH…IWKH).

It belongs to the PlsY family. In terms of assembly, probably interacts with PlsX.

The protein resides in the cell inner membrane. It catalyses the reaction an acyl phosphate + sn-glycerol 3-phosphate = a 1-acyl-sn-glycero-3-phosphate + phosphate. The protein operates within lipid metabolism; phospholipid metabolism. In terms of biological role, catalyzes the transfer of an acyl group from acyl-phosphate (acyl-PO(4)) to glycerol-3-phosphate (G3P) to form lysophosphatidic acid (LPA). This enzyme utilizes acyl-phosphate as fatty acyl donor, but not acyl-CoA or acyl-ACP. The polypeptide is Glycerol-3-phosphate acyltransferase (Prochlorococcus marinus (strain MIT 9301)).